A 196-amino-acid polypeptide reads, in one-letter code: Large ribosomal subunit protein uL10 (196 aa).

The segment at 169–196 (KAAECPAEAPQPAAETPAEAPEAPADAE) is disordered. The segment covering 172 to 196 (ECPAEAPQPAAETPAEAPEAPADAE) has biased composition (low complexity).

The protein belongs to the universal ribosomal protein uL10 family. Part of the ribosomal stalk of the 50S ribosomal subunit. The N-terminus interacts with L11 and the large rRNA to form the base of the stalk. The C-terminus forms an elongated spine to which L12 dimers bind in a sequential fashion forming a multimeric L10(L12)X complex.

Its function is as follows. Forms part of the ribosomal stalk, playing a central role in the interaction of the ribosome with GTP-bound translation factors. The polypeptide is Large ribosomal subunit protein uL10 (Mycobacterium avium (strain 104)).